A 248-amino-acid polypeptide reads, in one-letter code: Homeobox protein Hox-A4 (248 aa).

The interval 23 to 107 is disordered; sequence YQQSGYIPNP…PDGGAGANAS (85 aa). The span at 35–51 shows a compositional bias: basic and acidic residues; it reads YYERPKDTGFPHHDEPS. The short motif at 128-133 is the Antp-type hexapeptide element; that stretch reads VYPWMK. A DNA-binding region (homeobox) is located at residues 149–208; the sequence is PKRSRTAYTRQQALELEKEFHFNRYLTRRRRVEIAHTMCLSERQVKIWFQNRRMKWKKEH. Residues 207–248 are disordered; it reads EHKLPNTKIRSSSSASSSASGAQQQQIKTGQQLVPTPCTAGL. Positions 217–238 are enriched in low complexity; the sequence is SSSSASSSASGAQQQQIKTGQQ.

It belongs to the Antp homeobox family. Deformed subfamily.

It localises to the nucleus. Sequence-specific transcription factor which is part of a developmental regulatory system that provides cells with specific positional identities on the anterior-posterior axis. The chain is Homeobox protein Hox-A4 (hoxa4) from Morone saxatilis (Striped bass).